Consider the following 559-residue polypeptide: Cytokine-like nuclear factor N-PAC (559 aa).

In terms of domain architecture, PWWP spans 9–70 (VNDLVWAKMK…ETQIKPYQEF (62 aa)). Residues 106–137 (SEQDNRPDPDVEFNKLREGGTESGEETTVNNT) form a disordered region. Over residues 108–125 (QDNRPDPDVEFNKLREGG) the composition is skewed to basic and acidic residues. The dehydrogenase domain stretch occupies residues 267 to 559 (RNIQASNLKF…SSAVYVRARF (293 aa)). NAD(+)-binding positions include 277 to 291 (GFLGLGIMGCGMVKN) and Lys511.

Belongs to the HIBADH-related family. NP60 subfamily. Binds to mononucleosomes.

It is found in the chromosome. Its function is as follows. Nucleosome-destabilizing factor that is recruited to genes during transcriptional activation and colocalizes with a subset of trimethylated 'Lys-36' histone H3 (H3K36me3)-enriched regions. The polypeptide is Cytokine-like nuclear factor N-PAC (Aedes aegypti (Yellowfever mosquito)).